The primary structure comprises 344 residues: Biotin synthase (344 aa).

The Radical SAM core domain occupies 40-267 (AEVQVSTLLS…KSMVRLSAGR (228 aa)). Residues Cys55, Cys59, and Cys62 each coordinate [4Fe-4S] cluster. Cys99, Cys130, Cys190, and Arg262 together coordinate [2Fe-2S] cluster.

The protein belongs to the radical SAM superfamily. Biotin synthase family. As to quaternary structure, homodimer. [4Fe-4S] cluster is required as a cofactor. The cofactor is [2Fe-2S] cluster.

The enzyme catalyses (4R,5S)-dethiobiotin + (sulfur carrier)-SH + 2 reduced [2Fe-2S]-[ferredoxin] + 2 S-adenosyl-L-methionine = (sulfur carrier)-H + biotin + 2 5'-deoxyadenosine + 2 L-methionine + 2 oxidized [2Fe-2S]-[ferredoxin]. It functions in the pathway cofactor biosynthesis; biotin biosynthesis; biotin from 7,8-diaminononanoate: step 2/2. In terms of biological role, catalyzes the conversion of dethiobiotin (DTB) to biotin by the insertion of a sulfur atom into dethiobiotin via a radical-based mechanism. The polypeptide is Biotin synthase (Xanthomonas campestris pv. campestris (strain 8004)).